We begin with the raw amino-acid sequence, 6306 residues long: Adhesion G-protein coupled receptor V1 (6306 aa).

Residues 1-29 form the signal peptide; sequence MSVFLGPGMPSASLLVNLLSALLILFVFG. Calx-beta domains lie at 30-117, 133-237, 262-362, 388-488, 645-745, 763-861, 876-979, 993-1093, 1108-1208, 1444-1544, 1564-1665, 1710-1809, 1850-1952, 1966-2079, 2107-2206, 2222-2324, 2441-2541, 2584-2676, 2689-2789, 2814-2925, 2947-3048, and 3063-3172; these read ETEI…FHLT, VTVT…IQLK, PVRF…HIML, KPYG…LQIL, PAIA…TLSL, DLII…VVLS, VNIT…VILL, ATLR…IILL, TVII…LKLV, AMPR…FILK, TIQK…RVTL, TGLP…VELL, ILVT…VSVL, TLTV…IELL, QLII…VQLM, VIII…VQLT, TLCL…FLIS, NISP…VSLV, DTVR…QVIL, LTVE…VNLT, TAQV…LILT, and LIIV…CTLF. The Extracellular portion of the chain corresponds to 30–5908; that stretch reads ETEIRFTGQT…TDNLSSYNEA (5879 aa). EAR repeat units lie at residues 3255–3296, 3297–3345, 3348–3393, 3395–3439, 3441–3488, and 3492–3534; these read VFSV…RWQG, IFIP…TFTS, KLFL…RWNG, SFVL…RWSG, GFIN…IWEM, and SFRY…CWNS. Calx-beta domains are found at residues 3525–3625, 3639–3739, 3775–3875, 3899–4006, 4020–4123, 4139–4239, 4255–4354, 4387–4489, 4512–4612, 4634–4734, 4992–5095, 5288–5332, and 5368–5468; these read DMSA…KVQL, SVTI…IVTL, GLVG…VTIT, AEIM…ISLI, VTVV…IQLI, IIIR…EFQL, ANIT…LTIT, RIII…ILLT, SPFG…IIKL, EFGD…VIQL, SGFI…INLT, AVEE…YVFL, and IGFS…FVEL. Residues 5747–5903 enclose the GAIN-B domain; that stretch reads SILALHWYPQ…AVYARTDNLS (157 aa). Intrachain disulfides connect cysteine 5856/cysteine 5885 and cysteine 5873/cysteine 5887. Residues 5856–5903 are GPS; that stretch reads CLLWNQAAASWLSDSQFCKVVEETADYVECACSHMSVYAVYARTDNLS. The helical transmembrane segment at 5909–5929 threads the bilayer; it reads FFTSGFICISGLCLAVLSHIF. Topologically, residues 5930–5939 are cytoplasmic; the sequence is CARYSMFAAK. Residues 5940 to 5960 form a helical membrane-spanning segment; that stretch reads LLTHMMAASLGTQILFLASAY. The Extracellular portion of the chain corresponds to 5961–5979; that stretch reads ASPQLAEESCSAMAAVTHY. The helical transmembrane segment at 5980 to 6000 threads the bilayer; the sequence is LYLCQFSWMLIQSVNFWYVLV. At 6001-6010 the chain is on the cytoplasmic side; it reads MNDEHTERRY. Residues 6011–6031 traverse the membrane as a helical segment; that stretch reads LLFFLLSWGLPAFVVILLIVI. Residues 6032 to 6059 are Extracellular-facing; that stretch reads LKGIYHQSMSQIYGLIHGDLCFIPNVYA. The helical transmembrane segment at 6060-6080 threads the bilayer; that stretch reads ALFTAALVPLTCLVVVFVVFI. Residues 6081 to 6104 lie on the Cytoplasmic side of the membrane; sequence HAYQVKPQWKAYDDVFRGRTNAAE. A helical transmembrane segment spans residues 6105–6125; it reads IPLILYLFALISVTWLWGGLH. At 6126-6133 the chain is on the extracellular side; it reads MAYRHFWM. The chain crosses the membrane as a helical span at residues 6134 to 6154; that stretch reads LVLFVIFNSLQGLYVFMVYFI. At 6155–6306 the chain is on the cytoplasmic side; that stretch reads LHNQMCCPMK…RRIPIADTHL (152 aa). The tract at residues 6216–6248 is disordered; sequence ASFQQGSQASPDLKPSPQNGATFPSSGGYGQGS. Residues 6217–6240 show a composition bias toward polar residues; sequence SFQQGSQASPDLKPSPQNGATFPS.

Belongs to the G-protein coupled receptor 2 family. Adhesion G-protein coupled receptor (ADGR) subfamily. Forms a heterodimer, consisting of a large extracellular region (alpha subunit) non-covalently linked to a seven-transmembrane moiety (beta subunit). Component of USH2 complex, composed of ADGRV1, PDZD7, USH2A and WHRN. Interacts with USH2A and WHRN. Interacts (via the cytoplasmic region) with PDZD7. Interacts (via the cytoplasmic region) with MYO7A (via MyTH4-FERM domains). In terms of processing, autoproteolytically cleaved into 2 subunits, an extracellular alpha subunit and a seven-transmembrane subunit. As to expression, expressed at low levels in adult tissues.

Its subcellular location is the cell membrane. It is found in the cell projection. The protein localises to the stereocilium membrane. The protein resides in the photoreceptor inner segment. Functionally, G-protein coupled receptor which has an essential role in the development of hearing and vision. Couples to G-alpha(i)-proteins, GNAI1/2/3, G-alpha(q)-proteins, GNAQ, as well as G-alpha(s)-proteins, GNAS, inhibiting adenylate cyclase (AC) activity and cAMP production. Required for the hair bundle ankle formation, which connects growing stereocilia in developing cochlear hair cells of the inner ear. In response to extracellular calcium, activates kinases PKA and PKC to regulate myelination by inhibiting the ubiquitination of MAG, thus enhancing the stability of this protein in myelin-forming cells of the auditory pathway. In retina photoreceptors, the USH2 complex is required for the maintenance of periciliary membrane complex that seems to play a role in regulating intracellular protein transport. Involved in the regulation of bone metabolism. Cleaved ADGRV1 beta-subunit couples with G-alpha(i)-proteins, GNAI1/2/3, and constitutively inhibits adenylate cyclase (AC) activity with a stronger effect than full ADGRV1. The polypeptide is Adhesion G-protein coupled receptor V1 (Homo sapiens (Human)).